A 161-amino-acid polypeptide reads, in one-letter code: Cyclic pyranopterin monophosphate synthase (161 aa).

Residues 75 to 77 and 115 to 116 contribute to the substrate site; these read MCH and ME. The active site involves D130.

The protein belongs to the MoaC family. Homohexamer; trimer of dimers.

The catalysed reaction is (8S)-3',8-cyclo-7,8-dihydroguanosine 5'-triphosphate = cyclic pyranopterin phosphate + diphosphate. Its pathway is cofactor biosynthesis; molybdopterin biosynthesis. In terms of biological role, catalyzes the conversion of (8S)-3',8-cyclo-7,8-dihydroguanosine 5'-triphosphate to cyclic pyranopterin monophosphate (cPMP). This Bacillus mycoides (strain KBAB4) (Bacillus weihenstephanensis) protein is Cyclic pyranopterin monophosphate synthase.